The primary structure comprises 133 residues: Complexin-1 (133 aa).

Disordered stretches follow at residues Met1–Ala40 and Ala85–Glu112. A compositionally biased stretch (basic and acidic residues) spans Asp15–Ala40. The stretch at Pro28–Glu60 forms a coiled coil.

This sequence belongs to the complexin/synaphin family. Binds to the SNARE core complex containing SNAP25, VAMP2 and syntaxin-1. In terms of tissue distribution, nervous system. Present in electric organ (at protein level).

It localises to the cytoplasm. The protein resides in the cytosol. Its function is as follows. Positively regulates a late step in synaptic vesicle exocytosis. This chain is Complexin-1, found in Narke japonica (Japanese sleeper ray).